Reading from the N-terminus, the 338-residue chain is Phenylalanine--tRNA ligase alpha subunit (338 aa).

Glutamate 252 is a Mg(2+) binding site.

The protein belongs to the class-II aminoacyl-tRNA synthetase family. Phe-tRNA synthetase alpha subunit type 1 subfamily. In terms of assembly, tetramer of two alpha and two beta subunits. Requires Mg(2+) as cofactor.

The protein resides in the cytoplasm. It catalyses the reaction tRNA(Phe) + L-phenylalanine + ATP = L-phenylalanyl-tRNA(Phe) + AMP + diphosphate + H(+). The polypeptide is Phenylalanine--tRNA ligase alpha subunit (Mycoplasmoides gallisepticum (strain R(low / passage 15 / clone 2)) (Mycoplasma gallisepticum)).